The following is a 596-amino-acid chain: NADH-quinone oxidoreductase subunit C/D (596 aa).

The tract at residues 1-186 is NADH dehydrogenase I subunit C; the sequence is MTDLTAQDAA…DPFELTKAKQ (186 aa). The tract at residues 210–596 is NADH dehydrogenase I subunit D; it reads DFMFLNLGPN…IDFVMSDVDR (387 aa).

The protein in the N-terminal section; belongs to the complex I 30 kDa subunit family. This sequence in the C-terminal section; belongs to the complex I 49 kDa subunit family. As to quaternary structure, NDH-1 is composed of 13 different subunits. Subunits NuoB, CD, E, F, and G constitute the peripheral sector of the complex.

The protein localises to the cell inner membrane. The catalysed reaction is a quinone + NADH + 5 H(+)(in) = a quinol + NAD(+) + 4 H(+)(out). NDH-1 shuttles electrons from NADH, via FMN and iron-sulfur (Fe-S) centers, to quinones in the respiratory chain. The immediate electron acceptor for the enzyme in this species is believed to be ubiquinone. Couples the redox reaction to proton translocation (for every two electrons transferred, four hydrogen ions are translocated across the cytoplasmic membrane), and thus conserves the redox energy in a proton gradient. In Salmonella choleraesuis (strain SC-B67), this protein is NADH-quinone oxidoreductase subunit C/D.